A 149-amino-acid polypeptide reads, in one-letter code: MNKGHRHIIIRELITSNEIDTQEDLVELLLERDVKVTQATVSRDIKELHLVKVPTQTGGYKYSLPADNSFNPHQKLKRALIDCFICIDTVQFMIILKVMPGNGNSVGALIDNLDWPEKAGTLCGDDTCLIICRSEENAKTLTDRFIDML.

The protein belongs to the ArgR family.

The protein resides in the cytoplasm. It participates in amino-acid biosynthesis; L-arginine biosynthesis [regulation]. Its function is as follows. Regulates arginine biosynthesis genes. The chain is Arginine repressor from Listeria innocua serovar 6a (strain ATCC BAA-680 / CLIP 11262).